The primary structure comprises 718 residues: Ribonuclease J (718 aa).

The tract at residues 1–130 is disordered; sequence MNDSRNRGRK…RGNRGGGRRN (130 aa). 2 stretches are compositionally biased toward low complexity: residues 55-91 and 100-118; these read AAQG…NNNR and SGNA…NRQG. Positions 220, 222, 224, 225, 287, and 309 each coordinate Zn(2+). 510–514 is a substrate binding site; sequence HTSGH. Residue His-536 participates in Zn(2+) binding.

This sequence belongs to the metallo-beta-lactamase superfamily. RNA-metabolizing metallo-beta-lactamase-like family. Bacterial RNase J subfamily. As to quaternary structure, homodimer, may be a subunit of the RNA degradosome. Zn(2+) serves as cofactor.

It is found in the cytoplasm. In terms of biological role, an RNase that has 5'-3' exonuclease and possibly endoonuclease activity. Involved in maturation of rRNA and in some organisms also mRNA maturation and/or decay. In Corynebacterium glutamicum (strain ATCC 13032 / DSM 20300 / JCM 1318 / BCRC 11384 / CCUG 27702 / LMG 3730 / NBRC 12168 / NCIMB 10025 / NRRL B-2784 / 534), this protein is Ribonuclease J.